The primary structure comprises 190 residues: Hypoxanthine/guanine phosphoribosyltransferase (190 aa).

The protein belongs to the purine/pyrimidine phosphoribosyltransferase family. Archaeal HPRT subfamily. In terms of assembly, homodimer.

It is found in the cytoplasm. It catalyses the reaction IMP + diphosphate = hypoxanthine + 5-phospho-alpha-D-ribose 1-diphosphate. It carries out the reaction GMP + diphosphate = guanine + 5-phospho-alpha-D-ribose 1-diphosphate. It participates in purine metabolism; IMP biosynthesis via salvage pathway; IMP from hypoxanthine: step 1/1. Its function is as follows. Catalyzes a salvage reaction resulting in the formation of IMP that is energically less costly than de novo synthesis. The protein is Hypoxanthine/guanine phosphoribosyltransferase of Methanosalsum zhilinae (strain DSM 4017 / NBRC 107636 / OCM 62 / WeN5) (Methanohalophilus zhilinae).